Here is a 414-residue protein sequence, read N- to C-terminus: Particulate methane monooxygenase alpha subunit (414 aa).

Residues 1-32 (MKTIKDRIAKWSAIGLLSAVAATAFYAPSASA) form the signal peptide. Cu cation is bound by residues histidine 33, histidine 48, histidine 72, histidine 137, and histidine 139. A cupredoxin domain used to construct soluble pmoB (spmoB) region spans residues 33–172 (HGEKSQAAFM…MSEFRNPVTT (140 aa)). 2 helical membrane passes run 186–206 (GNTYFWHAFWFAIGVAWIGYW) and 235–255 (VAMGFLAATILIVVMAMSSAN). The cupredoxin domain used to construct soluble pmoB (spmoB) stretch occupies residues 265-414 (QAGTMRGMKP…IDAPLIPSFM (150 aa)).

As to quaternary structure, m.capsulatus has two forms of methane monooxygenase, a soluble (sMMO) and a membrane-bound (particulate) type (pMMO). The particulate type is a nonamer composed of three alpha:beta:gamma heterotrimeric protomers assembled into a cylindrical structure; the beta and gamma subunits comprise the bulk of the membrane-spanning regions and the soluble regions are derived primarily from alpha subunits which form two antiparallel beta-barrel-like structures each. This assembly, also called pMMO hydroxylase (pMMO-H), is proposed to associate with methanol dehydrogenase (MDH), also designated as pMMO-R, to form the pMMO-C complex which seems to have greater methane monooxygenase activity. Requires Cu(2+) as cofactor.

It localises to the membrane. It catalyses the reaction methane + a quinol + O2 = methanol + a quinone + H2O. In terms of biological role, methane monooxygenase is responsible for the initial oxygenation of methane to methanol in methanotrophs. At least in vitro, specific quinols can replace NADH as reductants. This Methylococcus capsulatus (strain ATCC 33009 / NCIMB 11132 / Bath) protein is Particulate methane monooxygenase alpha subunit (pmoB1).